The sequence spans 492 residues: MTTQHSKTDVILIGGGIMSATLGTLLKELSPEKNIKVFEKLAQPGEESSNVWNNAGTGHSALCELNYTKEGKDGTVDCSKAIKINEQYQISKQFWAYLVKTGQLDNPDRFIQAVPHMSFVIGEDNVAFIKSRVATLKKSVLFEKMKLSQDEEEMKSWVPLMIEGRKSDEPIALTYDETGTDVNFGALTAKLFENLEQRGVGIQYKQNVLDIKKQKSGAWLVKVKDLETNETTTYESDFVFIGAGGASLPLLQKTGIKQSKHIGGFPVSGLFLRCTNQEVIDRHHAKVYGKAAVGAPPMSVPHLDTRFVDGKRSLLFGPFAGFSPKFLKTGSHMDLIKSVKPNNIVTMLSAGIKEMSLTKYLVSQLMLSNDERMDDLRVFFPNAKNEDWEVITAGQRVQVIKDTEDSKGNLQFGTEVITSDDGTLAALLGASPGASTAVDIMFDVLQRCYRDEFKGWEPKIKEMVPSFGYRLTDHEDLYHKINEEVTKYLQVK.

This sequence belongs to the MQO family. It depends on FAD as a cofactor.

The enzyme catalyses (S)-malate + a quinone = a quinol + oxaloacetate. It functions in the pathway carbohydrate metabolism; tricarboxylic acid cycle; oxaloacetate from (S)-malate (quinone route): step 1/1. The protein is Probable malate:quinone oxidoreductase 1 of Staphylococcus aureus (strain MW2).